Consider the following 334-residue polypeptide: Heat-inducible transcription repressor HrcA (334 aa).

It belongs to the HrcA family.

Functionally, negative regulator of class I heat shock genes (grpE-dnaK-dnaJ and groELS operons). Prevents heat-shock induction of these operons. The chain is Heat-inducible transcription repressor HrcA from Albidiferax ferrireducens (strain ATCC BAA-621 / DSM 15236 / T118) (Rhodoferax ferrireducens).